A 434-amino-acid chain; its full sequence is Glutamyl-tRNA reductase (434 aa).

Residues 49 to 52 (TCNR), serine 109, 114 to 116 (EPQ), and glutamine 120 each bind substrate. Cysteine 50 acts as the Nucleophile in catalysis. Residue 189–194 (GAGEMC) participates in NADP(+) binding.

It belongs to the glutamyl-tRNA reductase family. As to quaternary structure, homodimer.

The enzyme catalyses (S)-4-amino-5-oxopentanoate + tRNA(Glu) + NADP(+) = L-glutamyl-tRNA(Glu) + NADPH + H(+). The protein operates within porphyrin-containing compound metabolism; protoporphyrin-IX biosynthesis; 5-aminolevulinate from L-glutamyl-tRNA(Glu): step 1/2. Functionally, catalyzes the NADPH-dependent reduction of glutamyl-tRNA(Glu) to glutamate 1-semialdehyde (GSA). This is Glutamyl-tRNA reductase from Geotalea uraniireducens (strain Rf4) (Geobacter uraniireducens).